The primary structure comprises 451 residues: Tubulin alpha chain (451 aa).

Q11 is a GTP binding site. N6-acetyllysine is present on K40. GTP contacts are provided by E71, G144, T145, T179, N206, and N228. E71 serves as a coordination point for Mg(2+). The active site involves E254.

It belongs to the tubulin family. As to quaternary structure, dimer of alpha and beta chains. A typical microtubule is a hollow water-filled tube with an outer diameter of 25 nm and an inner diameter of 15 nM. Alpha-beta heterodimers associate head-to-tail to form protofilaments running lengthwise along the microtubule wall with the beta-tubulin subunit facing the microtubule plus end conferring a structural polarity. Microtubules usually have 13 protofilaments but different protofilament numbers can be found in some organisms and specialized cells. Mg(2+) is required as a cofactor. Post-translationally, undergoes a tyrosination/detyrosination cycle, the cyclic removal and re-addition of a C-terminal tyrosine residue by the enzymes tubulin tyrosine carboxypeptidase (TTCP) and tubulin tyrosine ligase (TTL), respectively. In terms of processing, acetylation of alpha chains at Lys-40 stabilizes microtubules and affects affinity and processivity of microtubule motors. This modification has a role in multiple cellular functions, ranging from cell motility, cell cycle progression or cell differentiation to intracellular trafficking and signaling.

The protein localises to the cytoplasm. It is found in the cytoskeleton. It catalyses the reaction GTP + H2O = GDP + phosphate + H(+). Tubulin is the major constituent of microtubules, a cylinder consisting of laterally associated linear protofilaments composed of alpha- and beta-tubulin heterodimers. Microtubules grow by the addition of GTP-tubulin dimers to the microtubule end, where a stabilizing cap forms. Below the cap, tubulin dimers are in GDP-bound state, owing to GTPase activity of alpha-tubulin. The protein is Tubulin alpha chain (TUBA) of Triticum aestivum (Wheat).